We begin with the raw amino-acid sequence, 99 residues long: Small ribosomal subunit protein uS14c (99 aa).

The protein belongs to the universal ribosomal protein uS14 family. In terms of assembly, part of the 30S ribosomal subunit.

The protein localises to the plastid. It is found in the chloroplast. In terms of biological role, binds 16S rRNA, required for the assembly of 30S particles. The protein is Small ribosomal subunit protein uS14c of Welwitschia mirabilis (Tree tumbo).